A 183-amino-acid polypeptide reads, in one-letter code: Probable chemoreceptor glutamine deamidase CheD (183 aa).

This sequence belongs to the CheD family.

It catalyses the reaction L-glutaminyl-[protein] + H2O = L-glutamyl-[protein] + NH4(+). Its function is as follows. Probably deamidates glutamine residues to glutamate on methyl-accepting chemotaxis receptors (MCPs), playing an important role in chemotaxis. The sequence is that of Probable chemoreceptor glutamine deamidase CheD from Zymomonas mobilis subsp. mobilis (strain ATCC 31821 / ZM4 / CP4).